We begin with the raw amino-acid sequence, 469 residues long: MSQNTLFDKVWDLHKVSSLPGGSDQIFIGLHLIHEVTSPQAFGALKDKNLKVKFPSRTVATVDHIVPTDNQSRPFKDNLAEQMIETLENNCLQHKIKFFNIGSGNQGIVHVVAPELGLTQPGMTIACGDSHTSTHGAFGSIAFGIGTSQVRDVLATQTIAMNKLKVRQIWCENNLSNGVYAKDLVLHIINELGVKAGVGFAYEFAGPAIDELSMEERMTICNMSIEGGARCGYINPDEKTFSYIKNRLYAPKHTQWDKALLWWKSLKSDENSIYDDVIKLDASKVEPTVTWGITPGQSLGINQLIPLLDDLPPNDQFIAEEAFEYMGFMPGQSIKDTPVDVCFIGSCTNGRISDLRVAAKILKDKKVSKKVKAFVVPGSEKVATEAKEEGLDKIFKDSGFQWREPGCSMCLAMNSDKLIGNQVSASSSNRNFKGRQGSPSGRTLLMSPAMVAAAAINGKVSDVREFINK.

3 residues coordinate [4Fe-4S] cluster: Cys-347, Cys-407, and Cys-410. Residues 424–441 are compositionally biased toward polar residues; that stretch reads SASSSNRNFKGRQGSPSG. The interval 424–443 is disordered; sequence SASSSNRNFKGRQGSPSGRT.

It belongs to the aconitase/IPM isomerase family. LeuC type 1 subfamily. In terms of assembly, heterodimer of LeuC and LeuD. [4Fe-4S] cluster serves as cofactor.

It catalyses the reaction (2R,3S)-3-isopropylmalate = (2S)-2-isopropylmalate. Its pathway is amino-acid biosynthesis; L-leucine biosynthesis; L-leucine from 3-methyl-2-oxobutanoate: step 2/4. Its function is as follows. Catalyzes the isomerization between 2-isopropylmalate and 3-isopropylmalate, via the formation of 2-isopropylmaleate. The polypeptide is 3-isopropylmalate dehydratase large subunit (Prochlorococcus marinus (strain MIT 9312)).